A 920-amino-acid chain; its full sequence is Protein O-mannosyl-transferase TMTC3 (920 aa).

Residues 1–14 (MLEGKMADINFKEV) are Cytoplasmic-facing. A helical transmembrane segment spans residues 15–35 (TLIVSVVAACYWNSLFCGFVF). At 36–94 (DDVSAILDNKDLHPSTPLKTLFQNDFWGTPMSEERSHKSYRPLTVLTFRLNYLLSELKP) the chain is on the extracellular side. Residues 95-115 (MSYHLLNTVFHAVVSVIFLKV) form a helical membrane-spanning segment. Topologically, residues 116–125 (CRLFLDKRSS) are cytoplasmic. The next 2 helical transmembrane spans lie at 126-144 (MIAALLFAVHPIHTEAVTG) and 145-163 (VVGRAELLSSVFFLAAFLS). Residues 164–171 (YTKSKGPD) are Cytoplasmic-facing. Residues 172 to 192 (NSIVWTPIVLTVFLVAVATLC) traverse the membrane as a helical segment. At 193–198 (KEQGIT) the chain is on the extracellular side. Residues 199-219 (VVGICCVYEVFVAQGYTLPML) traverse the membrane as a helical segment. Over 220–236 (CTVAGQFLRGKGSIPLS) the chain is Cytoplasmic. Residues 237 to 257 (MLQTLVKLIVLMLSTLLLVVV) traverse the membrane as a helical segment. At 258 to 325 (RVQVIQSQLP…LIESFLDVRN (68 aa)) the chain is on the extracellular side. Residues 326–346 (LATFAFFCFLGALGIFSLRYP) traverse the membrane as a helical segment. Residues 347-358 (GDSSKTVLMALC) lie on the Cytoplasmic side of the membrane. Residues 359-379 (LMALPFIPASNLFFPVGFVVA) traverse the membrane as a helical segment. The Extracellular segment spans residues 380–381 (ER). The helical transmembrane segment at 382–402 (VLYVPSMGFCILVAHGWQKIS) threads the bilayer. Residues 403–409 (NKSVLKK) are Cytoplasmic-facing. A helical transmembrane segment spans residues 410–428 (LSWVCLSMVILTHALKTLH). At 429-920 (RNWDWESEYT…EEIERILNGE (492 aa)) the chain is on the extracellular side. TPR repeat units lie at residues 451-484 (AKLWNNVGHALENEKNFEKALKYFLQATHVQPDD), 485-518 (IGAHMNVGRTYKNLNRSREAEASYMLAKSLMPQI), 534-567 (NVYINLANLIRANESRLEEADQLYRQAISMRPDF), 568-601 (KQAYISRGELLLKMNKPLKAKEAYLKALELDRNN), 602-635 (ADLWYNLAIVYIELKEPNEALKNFNRALELNPKH), 673-706 (ANGYFNLGMLAMDDKKDSEAESWMKKAIKLQPDF), 707-740 (RSALFNLALLYSQTAKELKALPILEELLKYYPDH), 742-775 (KGLILKGDILMNQKKDIPGAKKCFEKILEMDPSN), and 776-809 (VQGKHNLCVVYFEEKELLKAERCLVETLALAPHE). N-linked (GlcNAc...) asparagine glycosylation occurs at Asn499. Phosphotyrosine is present on Tyr508. Asn546 is a glycosylation site (N-linked (GlcNAc...) asparagine). The tract at residues 829 to 897 (VEQPLAPADK…APHKTTKDIK (69 aa)) is disordered. Basic and acidic residues predominate over residues 840–858 (PGTEEREEIPSEDVKEISS). The span at 867–880 (KTNNNRNSKSNKQS) shows a compositional bias: low complexity. Residues 887-897 (DAPHKTTKDIK) show a composition bias toward basic and acidic residues.

It belongs to the TMTC family.

It localises to the membrane. Its subcellular location is the endoplasmic reticulum. The catalysed reaction is a di-trans,poly-cis-dolichyl beta-D-mannosyl phosphate + L-seryl-[protein] = 3-O-(alpha-D-mannosyl)-L-seryl-[protein] + a di-trans,poly-cis-dolichyl phosphate + H(+). The enzyme catalyses a di-trans,poly-cis-dolichyl beta-D-mannosyl phosphate + L-threonyl-[protein] = 3-O-(alpha-D-mannosyl)-L-threonyl-[protein] + a di-trans,poly-cis-dolichyl phosphate + H(+). The protein operates within protein modification; protein glycosylation. Functionally, transfers mannosyl residues to the hydroxyl group of serine or threonine residues. The 4 members of the TMTC family are O-mannosyl-transferases dedicated primarily to the cadherin superfamily, each member seems to have a distinct role in decorating the cadherin domains with O-linked mannose glycans at specific regions. Also acts as O-mannosyl-transferase on other proteins such as PDIA3. Involved in the positive regulation of proteasomal protein degradation in the endoplasmic reticulum (ER), and the control of ER stress response. The sequence is that of Protein O-mannosyl-transferase TMTC3 from Mus musculus (Mouse).